The following is a 396-amino-acid chain: 1-deoxy-D-xylulose 5-phosphate reductoisomerase (396 aa).

Residues threonine 13, glycine 14, serine 15, isoleucine 16, and asparagine 127 each contribute to the NADPH site. Lysine 128 serves as a coordination point for 1-deoxy-D-xylulose 5-phosphate. Glutamate 129 is a binding site for NADPH. Aspartate 153 serves as a coordination point for Mn(2+). 1-deoxy-D-xylulose 5-phosphate contacts are provided by serine 154, glutamate 155, serine 184, and histidine 207. Glutamate 155 contributes to the Mn(2+) binding site. Glycine 213 lines the NADPH pocket. Residues serine 220, asparagine 225, lysine 226, and glutamate 229 each contribute to the 1-deoxy-D-xylulose 5-phosphate site. Mn(2+) is bound at residue glutamate 229.

Belongs to the DXR family. The cofactor is Mg(2+). It depends on Mn(2+) as a cofactor.

It catalyses the reaction 2-C-methyl-D-erythritol 4-phosphate + NADP(+) = 1-deoxy-D-xylulose 5-phosphate + NADPH + H(+). Its pathway is isoprenoid biosynthesis; isopentenyl diphosphate biosynthesis via DXP pathway; isopentenyl diphosphate from 1-deoxy-D-xylulose 5-phosphate: step 1/6. In terms of biological role, catalyzes the NADPH-dependent rearrangement and reduction of 1-deoxy-D-xylulose-5-phosphate (DXP) to 2-C-methyl-D-erythritol 4-phosphate (MEP). This is 1-deoxy-D-xylulose 5-phosphate reductoisomerase from Pseudomonas syringae pv. syringae (strain B728a).